The following is a 465-amino-acid chain: Glutamate--tRNA ligase (465 aa).

A 'HIGH' region motif is present at residues 11-21 (PSPTGFIHLGN). Positions 120–131 (KPRYDGTWRPEP) are enriched in basic and acidic residues. Residues 120–139 (KPRYDGTWRPEPGKVLPTPP) form a disordered region. The 'KMSKS' region motif lies at 243-247 (KMSKR). Lys-246 serves as a coordination point for ATP.

Belongs to the class-I aminoacyl-tRNA synthetase family. Glutamate--tRNA ligase type 1 subfamily. In terms of assembly, monomer.

It localises to the cytoplasm. The enzyme catalyses tRNA(Glu) + L-glutamate + ATP = L-glutamyl-tRNA(Glu) + AMP + diphosphate. Catalyzes the attachment of glutamate to tRNA(Glu) in a two-step reaction: glutamate is first activated by ATP to form Glu-AMP and then transferred to the acceptor end of tRNA(Glu). In Ralstonia nicotianae (strain ATCC BAA-1114 / GMI1000) (Ralstonia solanacearum), this protein is Glutamate--tRNA ligase.